The primary structure comprises 1088 residues: RNA-directed RNA polymerase (1088 aa).

Positions 501-687 (LSYGDVTRFL…AKRYIAGGKI (187 aa)) constitute a RdRp catalytic domain.

The protein belongs to the reoviridae RNA-directed RNA polymerase family. As to quaternary structure, interacts with VP3 (Potential). Interacts with VP2; this interaction activates VP1. Interacts with NSP5; this interaction is probably necessary for the formation of functional virus factories. Interacts with NSP2; this interaction is weak. It depends on Mg(2+) as a cofactor.

The protein localises to the virion. It carries out the reaction RNA(n) + a ribonucleoside 5'-triphosphate = RNA(n+1) + diphosphate. Functionally, RNA-directed RNA polymerase that is involved in both transcription and genome replication. Together with VP3 capping enzyme, forms an enzyme complex positioned near the channels situated at each of the five-fold vertices of the core. Following infection, the outermost layer of the virus is lost, leaving a double-layered particle (DLP) made up of the core and VP6 shell. VP1 then catalyzes the transcription of fully conservative plus-strand genomic RNAs that are extruded through the DLP's channels into the cytoplasm where they function as mRNAs for translation of viral proteins. One copy of each of the viral (+)RNAs is also recruited during core assembly, together with newly synthesized polymerase complexes and VP2. The polymerase of these novo-formed particles catalyzes the synthesis of complementary minus-strands leading to dsRNA formation. To do so, the polymerase specifically recognizes and binds 4 bases 5'-UGUG-3' in the conserved 3'-sequence of plus-strand RNA templates. VP2 presumably activates the autoinhibited VP1-RNA complex to coordinate packaging and genome replication. Once dsRNA synthesis is complete, the polymerase switches to the transcriptional mode, thus providing secondary transcription. This is RNA-directed RNA polymerase from Homo sapiens (Human).